The sequence spans 1012 residues: AP-2 complex subunit alpha-1 (1012 aa).

4 HEAT repeats span residues 254-289, 354-391, 393-430, and 525-565; these read AMRA…VVKN, DIIK…VSNA, DIVE…DLSW, and PTIP…CIDV. A disordered region spans residues 652-678; sequence STDPESVARSLSHPNGTLSNIDPQTPS. The span at 663 to 675 shows a compositional bias: polar residues; it reads SHPNGTLSNIDPQ. The 100-residue stretch at 742-841 folds into the GAE domain; that stretch reads ALCLKDSGVL…LDFSYKFGAN (100 aa).

It belongs to the adaptor complexes large subunit family. Adaptor protein complex 2 (AP-2) is a heterotetramer composed of two large adaptins (alpha-type and beta-type subunits), a medium adaptin (mu-type subunit) and a small adaptin (sigma-type subunit). Binds to EPSIN2.

The protein resides in the membrane. It localises to the coated pit. Functionally, subunit of the adaptor protein complex 2 (AP-2). Adaptor protein complexes function in protein transport via transport vesicles in different membrane traffic pathways. Adaptor protein complexes are vesicle coat components and appear to be involved in cargo selection and vesicle formation. AP-2 is involved in clathrin-dependent endocytosis in which cargo proteins are incorporated into vesicles surrounded by clathrin (clathrin-coated vesicles, CCVs) which are destined for fusion with the early endosome. The complex binds polyphosphoinositides. The chain is AP-2 complex subunit alpha-1 (ALPHA-ADR) from Arabidopsis thaliana (Mouse-ear cress).